The chain runs to 138 residues: Spermidine export protein MdtJ (138 aa).

The next 4 helical transmembrane spans lie at 1–21, 30–50, 54–74, and 81–101; these read MIYWLFLAMAIITEVIGTLSM, VVGMAVMYIMIATSYILLAMA, VALGVAYALWEGVGILFITVF, and ESLSLMKVGGLALLITGIMLI.

It belongs to the drug/metabolite transporter (DMT) superfamily. Small multidrug resistance (SMR) (TC 2.A.7.1) family. MdtJ subfamily. In terms of assembly, forms a complex with MdtI.

It is found in the cell inner membrane. Catalyzes the excretion of spermidine. This is Spermidine export protein MdtJ from Photorhabdus laumondii subsp. laumondii (strain DSM 15139 / CIP 105565 / TT01) (Photorhabdus luminescens subsp. laumondii).